The primary structure comprises 348 residues: tRNA N6-adenosine threonylcarbamoyltransferase (348 aa).

Fe cation contacts are provided by H116 and H120. Substrate contacts are provided by residues 138 to 142, D171, G184, D188, and N277; that span reads QVSGG. D309 is a binding site for Fe cation.

The protein belongs to the KAE1 / TsaD family. Fe(2+) is required as a cofactor.

It localises to the cytoplasm. It catalyses the reaction L-threonylcarbamoyladenylate + adenosine(37) in tRNA = N(6)-L-threonylcarbamoyladenosine(37) in tRNA + AMP + H(+). Required for the formation of a threonylcarbamoyl group on adenosine at position 37 (t(6)A37) in tRNAs that read codons beginning with adenine. Is involved in the transfer of the threonylcarbamoyl moiety of threonylcarbamoyl-AMP (TC-AMP) to the N6 group of A37, together with TsaE and TsaB. TsaD likely plays a direct catalytic role in this reaction. The sequence is that of tRNA N6-adenosine threonylcarbamoyltransferase from Lactobacillus gasseri (strain ATCC 33323 / DSM 20243 / BCRC 14619 / CIP 102991 / JCM 1131 / KCTC 3163 / NCIMB 11718 / NCTC 13722 / AM63).